We begin with the raw amino-acid sequence, 1014 residues long: MKTHSNVSWLRDVNVFAVNRLPAHSDHVYYETVEEAKKEPPMSMRHSLNGHWKFHYAINPNTRPKEFYQLGFDCKCWDDILVPGHIQLQGYGKPQYVNTMYPWDGHHHLRPPEIPEDDNPVGSYVKYFDIPNNMSNHPLFISFQGVETAFYVWLNGEFVGYSEDSFTPAEFDLTPYAVEGENKLCVEVYQRSTGSWLEDQDFWRFSGIFRDVYLYTIPNIHVYDMHVRADLDRSLQTGILETTLELKRSQEKEVMIVAELYDAEGAVVATADMKTNQDQATVSMSVDSPALWSAEDPYLYKLFLKLFDENGTLVEVVPQKIGFRRFELVNNIMTLNGKRIVFKGVNRHEFNGRTGRVVTKEDMLEDIKTMKKHNINAVRTSHYPNNSEWYQLCDEYGLYVIDEMNLETHGSWQKLGKVEPSWNIPGNHLEWEPIVMDRAVSMFERDKNHPSILIWSCGNESYAGEVILNVSRYFKSVDPSRLVHYEGVFHARAYDATSDMESRMYAKPKDIEDYLTNDPKKPYISCEYMHAMGNSLGGMHKYTELEQKYPMYQGGFIWDYIDQALLKKDRYGKEYFAYGGDFGDRPTDYSFCANGIVYADRKPSPKMQEVKFLYQNIKLVPDREGVLVKNENLFTDTSAYQLEYVLYWEGTELYRKKQDVFVAPQEEVYLPFDWLEQGMNESGEYCIHTMLTLKQDQLWAEKGHEVAFGQHVYRMGAIQKERNARGALKVVHGDVNIGIHGEDFSVLFSKAVGSLVSLHYAGKEMIEQPPMPLFWRATTDNDKGCSQLYHSGIWYAASLARKCVNMEVEEKPGHVSVLFTYHFAISDRVEVKVGYTVFPDGSLRVRSTYQASKGGETLPQLPMFALSFKLPADYEQLEWYALGPEENYADRATGARLCTFKNKVEDSLSQYVTPQESGNRTGVRTVKILDANGQGIEVCSVEEPIECQISPYTAFELEQASHPYELPNVHYTVVNVAGKQMGVGGDDSWGAPVHDEYVLKADQDLEFVFDINRV.

Residue E460 is the Proton donor of the active site. The active-site Nucleophile is the E527.

It belongs to the glycosyl hydrolase 2 family.

The catalysed reaction is Hydrolysis of terminal non-reducing beta-D-galactose residues in beta-D-galactosides.. This is Beta-galactosidase (lacZ) from Halalkalibacterium halodurans (strain ATCC BAA-125 / DSM 18197 / FERM 7344 / JCM 9153 / C-125) (Bacillus halodurans).